The following is a 55-amino-acid chain: Neurotoxin X-29S (55 aa).

A signal peptide spans 1–23 (MKIFFAVLVILVLFSMLIWTAYG). Disulfide bonds link Cys30–Cys45, Cys36–Cys50, and Cys39–Cys53.

Expressed by the venom gland.

It is found in the secreted. The sequence is that of Neurotoxin X-29S from Olivierus martensii (Manchurian scorpion).